The following is a 428-amino-acid chain: Glutamyl-tRNA reductase (428 aa).

Residues 49-52, Ser-109, 114-116, and Gln-120 contribute to the substrate site; these read TCNR and EGQ. The active-site Nucleophile is the Cys-50. 189–194 lines the NADP(+) pocket; the sequence is GAGKMS.

Belongs to the glutamyl-tRNA reductase family. Homodimer.

It catalyses the reaction (S)-4-amino-5-oxopentanoate + tRNA(Glu) + NADP(+) = L-glutamyl-tRNA(Glu) + NADPH + H(+). It functions in the pathway porphyrin-containing compound metabolism; protoporphyrin-IX biosynthesis; 5-aminolevulinate from L-glutamyl-tRNA(Glu): step 1/2. Its pathway is porphyrin-containing compound metabolism; chlorophyll biosynthesis. Functionally, catalyzes the NADPH-dependent reduction of glutamyl-tRNA(Glu) to glutamate 1-semialdehyde (GSA). In Microcystis aeruginosa (strain NIES-843 / IAM M-2473), this protein is Glutamyl-tRNA reductase.